Here is a 464-residue protein sequence, read N- to C-terminus: MNTLFDKIWDAHVVTTVEDGPTQLYIDRLYCHEVTSPQAFAGLRERGIKVLRPEKVFCMPDHNTPTHDQDKPIEDPISKTQVDTLTKNAKDFGLTHFGMMHPKNGIIHVVGPERALTLPGMTIVCGDSHTSTHGAMGAIAFGIGTSEVEMVLASQCILQSRPKTMRITVDGELGKGVTAKDVALYMMSKMTTSGATGYFVEYAGSAIRNLTMEGRLTLCNLSIEMGARGGMVAPDEVTFEYIKGRENAPQGEAWDQAMEYWKTLKSDDDAVFDQEVRFDAADIEPMITYGTNPGMGMGITQNIPTTEGMGEAAQVSFKKSMEYMGFQPGESLLGKKIDYVFLGACTNGRIEDFRAFASLVKGRRKADNVIAWLVPGSWMVDAQIRKEGIDKILTEAGFAIRQPGCSACLAMNDDKIPAGKYSVSTSNRNFEGRQGPGARTLLASPLVAAAAAVTGVITDPRELM.

Residues Cys-345, Cys-405, and Cys-408 each contribute to the [4Fe-4S] cluster site.

It belongs to the aconitase/IPM isomerase family. LeuC type 1 subfamily. As to quaternary structure, heterodimer of LeuC and LeuD. Requires [4Fe-4S] cluster as cofactor.

The enzyme catalyses (2R,3S)-3-isopropylmalate = (2S)-2-isopropylmalate. Its pathway is amino-acid biosynthesis; L-leucine biosynthesis; L-leucine from 3-methyl-2-oxobutanoate: step 2/4. Functionally, catalyzes the isomerization between 2-isopropylmalate and 3-isopropylmalate, via the formation of 2-isopropylmaleate. This chain is 3-isopropylmalate dehydratase large subunit, found in Bacteroides thetaiotaomicron (strain ATCC 29148 / DSM 2079 / JCM 5827 / CCUG 10774 / NCTC 10582 / VPI-5482 / E50).